We begin with the raw amino-acid sequence, 425 residues long: MSNSLSSQIFTRKMLICAFTGFNSGLPLFVLSQMLPVWLTDKHLSIELIGAVTGVMLPYGLKFLWAPLLDRYFPSFLGRRRSWMLLSQVALLILLYIISLFDPLTQLGTVANIALLIAFFSATQDIVLDAYRREILSDHELGLGNTIHINAYRIAGLIPGGLSLYLAAIYPWETVFLWTALCMLAGIFMTLFLAKEPKIDMQQTNQPFYQAFWIPLQEFFQRKGVIQAIGFLLFLFLYKFGDSFATTLQTKFIYDMGFSKEDIAIVVKSTALWSSILSGLAGGMIMLKLGINRALWLFGLVQMVTIGGFIWLAAFGHFDVITSAELWKLGVVIAAEYIGVGLGTAAFVAFMARESNPLYTATQLALFTSLSALPSKVLGILSGYVVGAVGYYQYFWFCLFLAIPGMLCLFWVAPLKQENNKTSSV.

Transmembrane regions (helical) follow at residues 15-35 (LICAFTGFNSGLPLFVLSQML), 48-68 (LIGAVTGVMLPYGLKFLWAPL), 84-104 (MLLSQVALLILLYIISLFDPL), 107-127 (LGTVANIALLIAFFSATQDIV), 149-169 (INAYRIAGLIPGGLSLYLAAI), 174-194 (TVFLWTALCMLAGIFMTLFLA), 225-245 (VIQAIGFLLFLFLYKFGDSFA), 271-291 (ALWSSILSGLAGGMIMLKLGI), 295-315 (LWLFGLVQMVTIGGFIWLAAF), 331-351 (VVIAAEYIGVGLGTAAFVAFM), 370-390 (LSALPSKVLGILSGYVVGAVG), and 395-415 (FWFCLFLAIPGMLCLFWVAPL).

This sequence to E.coli AmpG and yeast YBR220c.

It is found in the cell inner membrane. This is an uncharacterized protein from Haemophilus influenzae (strain ATCC 51907 / DSM 11121 / KW20 / Rd).